The following is a 303-amino-acid chain: Glutathione transport system permease protein GsiD (303 aa).

Helical transmembrane passes span 40 to 60 (AMTA…ARWI), 105 to 125 (LAAG…LGLL), 144 to 164 (LFAF…GSGI), 165 to 185 (ANVI…LVRG), 222 to 242 (IVVF…SLSF), and 266 to 286 (VIAP…VLAF). The ABC transmembrane type-1 domain occupies 101–290 (AQISLAAGVF…LTVLAFNLLG (190 aa)).

It belongs to the binding-protein-dependent transport system permease family. The complex is composed of two ATP-binding proteins (GsiA), two transmembrane proteins (GsiC and GsiD) and a solute-binding protein (GsiB).

The protein resides in the cell inner membrane. Its function is as follows. Part of the ABC transporter complex GsiABCD involved in glutathione import. Probably responsible for the translocation of the substrate across the membrane. This is Glutathione transport system permease protein GsiD from Escherichia coli O157:H7.